The sequence spans 314 residues: L-lactate dehydrogenase 1 (314 aa).

Residues valine 16, aspartate 37, lysine 42, tyrosine 68, and 82 to 83 (GL) contribute to the NAD(+) site. Residues glutamine 85, arginine 91, and 123–126 (NPVD) each bind substrate. NAD(+)-binding positions include 121 to 123 (ATN) and serine 146. 151-154 (DSAR) lines the substrate pocket. The beta-D-fructose 1,6-bisphosphate site is built by arginine 156 and histidine 171. Histidine 178 acts as the Proton acceptor in catalysis. Tyrosine 223 is subject to Phosphotyrosine. Residue threonine 232 coordinates substrate.

This sequence belongs to the LDH/MDH superfamily. LDH family. In terms of assembly, homotetramer.

It is found in the cytoplasm. It catalyses the reaction (S)-lactate + NAD(+) = pyruvate + NADH + H(+). Its pathway is fermentation; pyruvate fermentation to lactate; (S)-lactate from pyruvate: step 1/1. With respect to regulation, allosterically activated by fructose 1,6-bisphosphate (FBP). Its function is as follows. Catalyzes the conversion of lactate to pyruvate. This Bacillus anthracis protein is L-lactate dehydrogenase 1.